The primary structure comprises 172 residues: Adenine phosphoribosyltransferase (172 aa).

Belongs to the purine/pyrimidine phosphoribosyltransferase family. Homodimer.

The protein localises to the cytoplasm. The catalysed reaction is AMP + diphosphate = 5-phospho-alpha-D-ribose 1-diphosphate + adenine. The protein operates within purine metabolism; AMP biosynthesis via salvage pathway; AMP from adenine: step 1/1. Functionally, catalyzes a salvage reaction resulting in the formation of AMP, that is energically less costly than de novo synthesis. The chain is Adenine phosphoribosyltransferase from Pediococcus pentosaceus (strain ATCC 25745 / CCUG 21536 / LMG 10740 / 183-1w).